The following is an 86-amino-acid chain: Co-chaperonin GroES (86 aa).

Belongs to the GroES chaperonin family. In terms of assembly, heptamer of 7 subunits arranged in a ring. Interacts with the chaperonin GroEL.

The protein resides in the cytoplasm. Together with the chaperonin GroEL, plays an essential role in assisting protein folding. The GroEL-GroES system forms a nano-cage that allows encapsulation of the non-native substrate proteins and provides a physical environment optimized to promote and accelerate protein folding. GroES binds to the apical surface of the GroEL ring, thereby capping the opening of the GroEL channel. In Sulfurovum sp. (strain NBC37-1), this protein is Co-chaperonin GroES.